A 204-amino-acid polypeptide reads, in one-letter code: Large ribosomal subunit protein eL15 (204 aa).

Belongs to the eukaryotic ribosomal protein eL15 family. Component of the large ribosomal subunit.

It localises to the cytoplasm. Its function is as follows. Component of the large ribosomal subunit. The ribosome is a large ribonucleoprotein complex responsible for the synthesis of proteins in the cell. The chain is Large ribosomal subunit protein eL15 (rpl15) from Hypophthalmichthys nobilis (Bighead carp).